We begin with the raw amino-acid sequence, 428 residues long: Elongation factor 1-alpha (428 aa).

Positions 5-225 constitute a tr-type G domain; it reads KPVLNVAFIG…DKFQPPEKPT (221 aa). Residues 14–21 are G1; sequence GHVDAGKS. 14-21 lines the GTP pocket; the sequence is GHVDAGKS. S21 is a Mg(2+) binding site. The tract at residues 70-74 is G2; sequence GVTID. The G3 stretch occupies residues 91–94; the sequence is DCPG. GTP contacts are provided by residues 91-95 and 149-152; these read DCPGH and NKMD. The G4 stretch occupies residues 149–152; sequence NKMD. The G5 stretch occupies residues 189–191; sequence ASL.

This sequence belongs to the TRAFAC class translation factor GTPase superfamily. Classic translation factor GTPase family. EF-Tu/EF-1A subfamily.

Its subcellular location is the cytoplasm. It carries out the reaction GTP + H2O = GDP + phosphate + H(+). In terms of biological role, GTP hydrolase that promotes the GTP-dependent binding of aminoacyl-tRNA to the A-site of ribosomes during protein biosynthesis. The chain is Elongation factor 1-alpha from Methanocaldococcus jannaschii (strain ATCC 43067 / DSM 2661 / JAL-1 / JCM 10045 / NBRC 100440) (Methanococcus jannaschii).